Reading from the N-terminus, the 217-residue chain is 2-phospho-L-lactate guanylyltransferase (217 aa).

It belongs to the CofC family. In terms of assembly, homodimer.

The catalysed reaction is (2S)-2-phospholactate + GTP + H(+) = (2S)-lactyl-2-diphospho-5'-guanosine + diphosphate. Its pathway is cofactor biosynthesis; coenzyme F420 biosynthesis. Functionally, guanylyltransferase that catalyzes the activation of (2S)-2-phospholactate (2-PL) as (2S)-lactyl-2-diphospho-5'-guanosine, via the condensation of 2-PL with GTP. It is involved in the biosynthesis of coenzyme F420, a hydride carrier cofactor. The chain is 2-phospho-L-lactate guanylyltransferase from Halorubrum lacusprofundi (strain ATCC 49239 / DSM 5036 / JCM 8891 / ACAM 34).